The sequence spans 294 residues: 4-hydroxy-tetrahydrodipicolinate synthase (294 aa).

T47 serves as a coordination point for pyruvate. The active-site Proton donor/acceptor is Y135. The active-site Schiff-base intermediate with substrate is K163. Residue T205 coordinates pyruvate.

This sequence belongs to the DapA family. As to quaternary structure, homotetramer; dimer of dimers.

It localises to the cytoplasm. The catalysed reaction is L-aspartate 4-semialdehyde + pyruvate = (2S,4S)-4-hydroxy-2,3,4,5-tetrahydrodipicolinate + H2O + H(+). It participates in amino-acid biosynthesis; L-lysine biosynthesis via DAP pathway; (S)-tetrahydrodipicolinate from L-aspartate: step 3/4. Its function is as follows. Catalyzes the condensation of (S)-aspartate-beta-semialdehyde [(S)-ASA] and pyruvate to 4-hydroxy-tetrahydrodipicolinate (HTPA). In Rickettsia africae (strain ESF-5), this protein is 4-hydroxy-tetrahydrodipicolinate synthase.